Consider the following 247-residue polypeptide: NAD(P)H-quinone oxidoreductase subunit K (247 aa).

Positions 63, 64, 128, and 159 each coordinate [4Fe-4S] cluster.

This sequence belongs to the complex I 20 kDa subunit family. In terms of assembly, NDH-1 can be composed of about 15 different subunits; different subcomplexes with different compositions have been identified which probably have different functions. The cofactor is [4Fe-4S] cluster.

The protein localises to the cellular thylakoid membrane. It carries out the reaction a plastoquinone + NADH + (n+1) H(+)(in) = a plastoquinol + NAD(+) + n H(+)(out). The catalysed reaction is a plastoquinone + NADPH + (n+1) H(+)(in) = a plastoquinol + NADP(+) + n H(+)(out). Functionally, NDH-1 shuttles electrons from an unknown electron donor, via FMN and iron-sulfur (Fe-S) centers, to quinones in the respiratory and/or the photosynthetic chain. The immediate electron acceptor for the enzyme in this species is believed to be plastoquinone. Couples the redox reaction to proton translocation, and thus conserves the redox energy in a proton gradient. Cyanobacterial NDH-1 also plays a role in inorganic carbon-concentration. This Gloeothece citriformis (strain PCC 7424) (Cyanothece sp. (strain PCC 7424)) protein is NAD(P)H-quinone oxidoreductase subunit K.